The sequence spans 255 residues: uncharacterized protein (255 aa).

The N-terminal stretch at 1 to 23 (MKRLNKLVLGIIFLFLVISITAG) is a signal peptide. A lipid anchor (N-palmitoyl cysteine) is attached at C24. C24 is lipidated: S-diacylglycerol cysteine.

Belongs to the staphylococcal tandem lipoprotein family.

Its subcellular location is the cell membrane. This is an uncharacterized protein from Staphylococcus aureus (strain USA300).